A 565-amino-acid chain; its full sequence is NAD-dependent malic enzyme (565 aa).

Y104 functions as the Proton donor in the catalytic mechanism. R157 is a binding site for NAD(+). K175 functions as the Proton acceptor in the catalytic mechanism. Residues E246, D247, and D270 each coordinate a divalent metal cation. NAD(+) is bound by residues D270 and N418.

The protein belongs to the malic enzymes family. Homotetramer. The cofactor is Mg(2+). Mn(2+) serves as cofactor.

The catalysed reaction is (S)-malate + NAD(+) = pyruvate + CO2 + NADH. It catalyses the reaction oxaloacetate + H(+) = pyruvate + CO2. This is NAD-dependent malic enzyme from Enterobacter sp. (strain 638).